The sequence spans 436 residues: Type II methyltransferase M.BsuRI (436 aa).

The 351-residue stretch at 59-409 (INVLSLFSGC…SPIANWAINY (351 aa)) folds into the SAM-dependent MTase C5-type domain. Residue cysteine 157 is part of the active site.

It belongs to the class I-like SAM-binding methyltransferase superfamily. C5-methyltransferase family. Monomer.

The catalysed reaction is a 2'-deoxycytidine in DNA + S-adenosyl-L-methionine = a 5-methyl-2'-deoxycytidine in DNA + S-adenosyl-L-homocysteine + H(+). A methylase, recognizes the double-stranded sequence 5'-GGCC-3', methylates C-3 on both strands, and protects the DNA from cleavage by the BsuRI endonuclease. This is Type II methyltransferase M.BsuRI (hsdRM) from Bacillus subtilis.